The sequence spans 251 residues: Putative imidazole glycerol phosphate synthase subunit hisF2 (251 aa).

The active site involves Asp130.

Belongs to the HisA/HisF family. In terms of assembly, heterodimer of HisH and HisF.

Its subcellular location is the cytoplasm. The enzyme catalyses 5-[(5-phospho-1-deoxy-D-ribulos-1-ylimino)methylamino]-1-(5-phospho-beta-D-ribosyl)imidazole-4-carboxamide + L-glutamine = D-erythro-1-(imidazol-4-yl)glycerol 3-phosphate + 5-amino-1-(5-phospho-beta-D-ribosyl)imidazole-4-carboxamide + L-glutamate + H(+). It functions in the pathway amino-acid biosynthesis; L-histidine biosynthesis; L-histidine from 5-phospho-alpha-D-ribose 1-diphosphate: step 5/9. Functionally, IGPS catalyzes the conversion of PRFAR and glutamine to IGP, AICAR and glutamate. The HisF subunit catalyzes the cyclization activity that produces IGP and AICAR from PRFAR using the ammonia provided by the HisH subunit. This Pseudomonas aeruginosa (strain ATCC 15692 / DSM 22644 / CIP 104116 / JCM 14847 / LMG 12228 / 1C / PRS 101 / PAO1) protein is Putative imidazole glycerol phosphate synthase subunit hisF2 (hisF2).